The following is a 108-amino-acid chain: SPbeta prophage-derived uncharacterized HTH-type transcriptional regulator YonR (108 aa).

The HTH cro/C1-type domain maps to 6 to 60 (LKKCRTSKGYSQQRMADFLGITRQGYGKYEIGKAEPDLKTLTKLSNILGVSTDFL). The H-T-H motif DNA-binding region spans 17 to 36 (QQRMADFLGITRQGYGKYEI).

This is SPbeta prophage-derived uncharacterized HTH-type transcriptional regulator YonR (yonR) from Bacillus subtilis (strain 168).